Here is a 221-residue protein sequence, read N- to C-terminus: uncharacterized protein (221 aa).

Residues 1 to 16 are compositionally biased toward basic and acidic residues; it reads MESSRWDKDPPGERRP. Residues 1–64 are disordered; it reads MESSRWDKDP…SHTPQTNTRR (64 aa).

This is an uncharacterized protein from Homo sapiens (Human).